A 267-amino-acid polypeptide reads, in one-letter code: tRNA pseudouridine synthase A (267 aa).

The active-site Nucleophile is Asp52. Tyr113 is a binding site for substrate.

Belongs to the tRNA pseudouridine synthase TruA family. As to quaternary structure, homodimer.

It catalyses the reaction uridine(38/39/40) in tRNA = pseudouridine(38/39/40) in tRNA. Its function is as follows. Formation of pseudouridine at positions 38, 39 and 40 in the anticodon stem and loop of transfer RNAs. The polypeptide is tRNA pseudouridine synthase A (Chlamydia pneumoniae (Chlamydophila pneumoniae)).